The sequence spans 277 residues: Energy-coupling factor transporter ATP-binding protein EcfA1 (277 aa).

Residues 5-243 (IRAQNVSFCY…VEVLKKIGLD (239 aa)) form the ABC transporter domain. 42-49 (GHNGSGKS) contributes to the ATP binding site.

It belongs to the ABC transporter superfamily. Energy-coupling factor EcfA family. As to quaternary structure, forms a stable energy-coupling factor (ECF) transporter complex composed of 2 membrane-embedded substrate-binding proteins (S component), 2 ATP-binding proteins (A component) and 2 transmembrane proteins (T component).

Its subcellular location is the cell membrane. In terms of biological role, ATP-binding (A) component of a common energy-coupling factor (ECF) ABC-transporter complex. Unlike classic ABC transporters this ECF transporter provides the energy necessary to transport a number of different substrates. This chain is Energy-coupling factor transporter ATP-binding protein EcfA1, found in Caldanaerobacter subterraneus subsp. tengcongensis (strain DSM 15242 / JCM 11007 / NBRC 100824 / MB4) (Thermoanaerobacter tengcongensis).